The primary structure comprises 893 residues: DNA mismatch repair protein MutS (893 aa).

638–645 (GPNMAGKS) contributes to the ATP binding site.

The protein belongs to the DNA mismatch repair MutS family.

Its function is as follows. This protein is involved in the repair of mismatches in DNA. It is possible that it carries out the mismatch recognition step. This protein has a weak ATPase activity. This chain is DNA mismatch repair protein MutS, found in Lawsonia intracellularis (strain PHE/MN1-00).